A 150-amino-acid chain; its full sequence is Large ribosomal subunit protein uL15 (150 aa).

The disordered stretch occupies residues 1 to 57 (MRLEDIRPQAGSTRRRRRLGRGVSAGQGASCGKGMRGQKARKGGSTRPGFEGGQTPL). Residues 23 to 35 (VSAGQGASCGKGM) are compositionally biased toward gly residues.

The protein belongs to the universal ribosomal protein uL15 family. In terms of assembly, part of the 50S ribosomal subunit.

Functionally, binds to the 23S rRNA. The polypeptide is Large ribosomal subunit protein uL15 (Synechococcus sp. (strain JA-2-3B'a(2-13)) (Cyanobacteria bacterium Yellowstone B-Prime)).